A 337-amino-acid polypeptide reads, in one-letter code: Putative long-chain-alcohol O-fatty-acyltransferase 10 (337 aa).

8 helical membrane-spanning segments follow: residues 7–27 (SFVK…YIPS), 38–58 (SVLP…FTIF), 59–79 (SSTT…LFAF), 82–102 (GPLL…CLPI), 142–162 (ILLL…LLTI), 228–248 (MGCM…YFYI), 254–274 (TLEV…EIAV), and 285–305 (MLLR…LFFG).

Belongs to the wax synthase family.

It localises to the membrane. The catalysed reaction is a long chain fatty alcohol + a fatty acyl-CoA = a wax ester + CoA. Catalyzes the final step in the synthesis of long-chain linear esters (waxes). This Arabidopsis thaliana (Mouse-ear cress) protein is Putative long-chain-alcohol O-fatty-acyltransferase 10.